The following is an 804-amino-acid chain: DNA gyrase subunit A (804 aa).

The Topo IIA-type catalytic domain occupies isoleucine 31–leucine 495. The O-(5'-phospho-DNA)-tyrosine intermediate role is filled by tyrosine 119. The GyrA-box motif lies at glutamine 522–glycine 528.

Belongs to the type II topoisomerase GyrA/ParC subunit family. As to quaternary structure, heterotetramer, composed of two GyrA and two GyrB chains. In the heterotetramer, GyrA contains the active site tyrosine that forms a transient covalent intermediate with DNA, while GyrB binds cofactors and catalyzes ATP hydrolysis.

The protein resides in the cytoplasm. It catalyses the reaction ATP-dependent breakage, passage and rejoining of double-stranded DNA.. A type II topoisomerase that negatively supercoils closed circular double-stranded (ds) DNA in an ATP-dependent manner to modulate DNA topology and maintain chromosomes in an underwound state. Negative supercoiling favors strand separation, and DNA replication, transcription, recombination and repair, all of which involve strand separation. Also able to catalyze the interconversion of other topological isomers of dsDNA rings, including catenanes and knotted rings. Type II topoisomerases break and join 2 DNA strands simultaneously in an ATP-dependent manner. The chain is DNA gyrase subunit A from Thermotoga maritima (strain ATCC 43589 / DSM 3109 / JCM 10099 / NBRC 100826 / MSB8).